A 149-amino-acid polypeptide reads, in one-letter code: Small ribosomal subunit protein uS19 (149 aa).

It belongs to the universal ribosomal protein uS19 family.

In terms of biological role, protein S19 forms a complex with S13 that binds strongly to the 16S ribosomal RNA. This Methanopyrus kandleri (strain AV19 / DSM 6324 / JCM 9639 / NBRC 100938) protein is Small ribosomal subunit protein uS19.